The primary structure comprises 524 residues: MKFNVLSLFAPWAKMDERNFKDQEKEDLVSITAPKLDDGAREFEVSSNEAASPYNAAFQTIFGSYEPGMKTTRELIDTYRNLMNNYEVDNAVSEIVSDAIVYEDDTEVVALNLDKSKFSPKIKNMMLDEFSDVLNHLSFQRKGSDHFRRWYVDSRIFFHKIIDPKRPKEGIKELRRLDPRQVQYVREIITETEAGTKIVKGYKEYFIYDTAHESYACDGRMYEAGTKIKIPKAAVVYAHSGLVDCCGKNIIGYLHRAVKPANQLKLLEDAVVIYRITRAPDRRVWYVDTGNMPARKAAEHMQHVMNTMKNRVVYDASTGKIKNQQHNMSMTEDYWLQRRDGKAVTEVDTLPGADNTGNMEDIRWFRQALYMALRVPLSRIPQDQQGGVMFDSGTSITRDELTFAKFIRELQHKFEEVFLDPLKTNLLLKGIITEDEWNDEINNIKIEFHRDSYFAELKEAEILERRINMLTMAEPFIGKYISHRTAMKDILQMTDEEIEQEAKQIEEESKEARFQDPDQEQEDF.

The stretch at 486 to 516 forms a coiled coil; it reads AMKDILQMTDEEIEQEAKQIEEESKEARFQD. A compositionally biased stretch (basic and acidic residues) spans 500 to 516; it reads QEAKQIEEESKEARFQD. The tract at residues 500 to 524 is disordered; it reads QEAKQIEEESKEARFQDPDQEQEDF.

The protein belongs to the Tevenvirinae portal protein family. As to quaternary structure, homododecamer. Interacts with the large terminase subunit. Interacts with the major capsid protein. Interacts with the capsid vertex protein.

The protein resides in the virion. It is found in the host cell inner membrane. Forms the portal vertex of the capsid. This portal plays critical roles in head assembly, genome packaging, neck/tail attachment, and genome ejection. The portal protein multimerizes as a single ring-shaped homododecamer arranged around a central channel. Binds to the terminase subunits to form the packaging machine. Attaches to the host inner membrane most likely through interaction with host yidC and forms together with chaperone gp40 an initiator complex to form the prohead. The protein is Portal protein (20) of Enterobacteria phage T4 (Bacteriophage T4).